A 187-amino-acid polypeptide reads, in one-letter code: Prepilin peptidase-dependent protein B (187 aa).

Residues 1–7 (MPVKEQG) constitute a propeptide, leader sequence. Phenylalanine 8 is subject to N-methylphenylalanine. Residues 8-28 (FSLLEVLIAMAISSVLLLGAA) form a helical membrane-spanning segment.

It localises to the membrane. Not yet known. The sequence is that of Prepilin peptidase-dependent protein B (ppdB) from Escherichia coli (strain K12).